The primary structure comprises 136 residues: Inner membrane protein YbhQ (136 aa).

At 1–12 (MKWQQRVRVATG) the chain is on the cytoplasmic side. The chain crosses the membrane as a helical span at residues 13 to 33 (LSCWQIMLHLLVVALLVVGWM). The Periplasmic portion of the chain corresponds to 34–37 (SKTL). Residues 38-58 (VHVGVGLCALYCVTVVMMLVF) form a helical membrane-spanning segment. Residues 59–71 (QRHPEQRWREVAD) lie on the Cytoplasmic side of the membrane. A helical membrane pass occupies residues 72–92 (VLEELTTTWYFGAALIVLWLL). Residues 93–99 (SRVLENN) lie on the Periplasmic side of the membrane. Residues 100 to 120 (FLLAIAGLAILAGPAVVSLLA) form a helical membrane-spanning segment. Residues 121 to 136 (KDKKLHHLTSKHRVRR) lie on the Cytoplasmic side of the membrane.

The protein resides in the cell inner membrane. The protein is Inner membrane protein YbhQ (ybhQ) of Escherichia coli O157:H7.